The following is a 99-amino-acid chain: Large ribosomal subunit protein uL23 (99 aa).

Belongs to the universal ribosomal protein uL23 family. In terms of assembly, part of the 50S ribosomal subunit. Contacts protein L29, and trigger factor when it is bound to the ribosome.

In terms of biological role, one of the early assembly proteins it binds 23S rRNA. One of the proteins that surrounds the polypeptide exit tunnel on the outside of the ribosome. Forms the main docking site for trigger factor binding to the ribosome. This is Large ribosomal subunit protein uL23 from Pseudomonas entomophila (strain L48).